Consider the following 321-residue polypeptide: tRNA 2-thiolation protein NcsA (321 aa).

Lys204 is covalently cross-linked (Glycyl lysine isopeptide (Lys-Gly) (interchain with G-Cter in SAMP2)).

It belongs to the TtcA family. CTU1/NCS6/ATPBD3 subfamily. Interacts with monomeric and polymeric forms of SAMP2. Interacts with UbaA. Interacts with archaeal EF-1-alpha and Pan1. Non-sampylated protein forms a complex with archaeal CPSF1 of approximately 100 kDa. Sampylated at Lys-204 with the archaeal ubiquitin-like protein SAMP2. Polymeric chains of SAMP2 are also linked.

The protein operates within tRNA modification; 5-methoxycarbonylmethyl-2-thiouridine-tRNA biosynthesis. Its function is as follows. Required for thiolation of mcm(5)S(2)U at the wobble uridine position of tRNA specific for lysine (tRNA(Lys)). Probably acts by catalyzing adenylation of tRNA, an intermediate required for 2-thiolation. May also act as a sulfurtransferase that transfers sulfur from thiocarboxylated SAMP2 onto the uridine of tRNA at wobble position. Required for cell growth at elevated temperatures. This Haloferax volcanii (strain ATCC 29605 / DSM 3757 / JCM 8879 / NBRC 14742 / NCIMB 2012 / VKM B-1768 / DS2) (Halobacterium volcanii) protein is tRNA 2-thiolation protein NcsA.